The sequence spans 140 residues: MKIAIYPGSFNPFHKGHLNILKKAILLFDKVYVVVSKNVNKSLDPDLQSRVENIKNLIKDFSNVEIIINENKLTTTIAKELNACFIIRGLRSQADFEYEIKYYDGFKSLDPNIEVVYFISDYDKRSLSSTILREIEFYKK.

S9 provides a ligand contact to substrate. ATP is bound by residues 9–10 (SF) and H17. Residues K41, T74, and R88 each coordinate substrate. ATP contacts are provided by residues 89-91 (GLR), E99, and 124-130 (KRSLSST).

This sequence belongs to the bacterial CoaD family. Homohexamer. The cofactor is Mg(2+).

It is found in the cytoplasm. The catalysed reaction is (R)-4'-phosphopantetheine + ATP + H(+) = 3'-dephospho-CoA + diphosphate. It participates in cofactor biosynthesis; coenzyme A biosynthesis; CoA from (R)-pantothenate: step 4/5. Its function is as follows. Reversibly transfers an adenylyl group from ATP to 4'-phosphopantetheine, yielding dephospho-CoA (dPCoA) and pyrophosphate. The chain is Phosphopantetheine adenylyltransferase from Mycoplasma capricolum subsp. capricolum (strain California kid / ATCC 27343 / NCTC 10154).